Reading from the N-terminus, the 323-residue chain is Ankyrin repeat and SOCS box protein 11 (323 aa).

ANK repeat units follow at residues 64–93 (ADRSPLHEAAAQGRLLALKTLIAQGVNVNL), 97–126 (NRVSSLHEACLGGHVACAKALLENGAHVNG), 130–159 (HGATPLFNACCSGSAACVNVLLEFGAKAQL), 162–191 (HLASPIHEAVKRGHRECMEILLANNVNIDH), 195–224 (QLGTPLYVACTYQRVDCVKKLLELGASVDH), and 227–256 (WLDTPLHAAARQSNVEVIHLLTDYGANLKR). One can recognise an SOCS box domain in the interval 273–323 (SVEQALLLREGPPALSQLCRLCVRKCLGRACHQAIHKLHLPEPLERFLLYQ).

It belongs to the ankyrin SOCS box (ASB) family. In terms of assembly, substrate-recognition component of the ECS(ASB11) complex, composed of ASB11, CUL5, ELOB, ELOC and RNF7/RBX2.

It is found in the endoplasmic reticulum. Its pathway is protein modification; protein ubiquitination. Substrate-recognition component of a cullin-5-RING E3 ubiquitin-protein ligase complex (ECS complex, also named CRL5 complex), which mediates the ubiquitination and subsequent proteasomal degradation of target proteins, such as BIK, DIRAS2 and RPN1. The ECS(ASB11) complex acts as a regulator of the endoplasmic reticulum unfolded protein response by mediating ubiquitination and degradation of BIK. This is Ankyrin repeat and SOCS box protein 11 from Homo sapiens (Human).